The primary structure comprises 721 residues: Glucans biosynthesis glucosyltransferase H (721 aa).

7 helical membrane-spanning segments follow: residues 54 to 74 (LIMVATAVLSAAGIYEMYQVL), 85 to 105 (VVLVLFAALFAWVALSFVSAL), 404 to 424 (GIGAYLTAPMWLAFLVAGILI), 458 to 478 (FAGTMGLLILPKLLALLLVLI), 493 to 513 (FGGVLLETMISALTAPVMMVF), 548 to 568 (YALPTALGATMAVGAWLVSWP), and 569 to 589 (LLLWMTPVIVGLLLAIPVALL).

This sequence belongs to the glycosyltransferase 2 family. OpgH subfamily.

It localises to the cell inner membrane. Its pathway is glycan metabolism; osmoregulated periplasmic glucan (OPG) biosynthesis. In terms of biological role, involved in the biosynthesis of osmoregulated periplasmic glucans (OPGs). The chain is Glucans biosynthesis glucosyltransferase H from Rhodopseudomonas palustris (strain TIE-1).